The primary structure comprises 568 residues: MSVSVFNRCWSKVILETLVRQGVSHVCIAPGSRSTPLTLEAVRLQNAGSVTCHTHFDERGLGFFALGIAKATQSPVAIIVTSGTATANLYPAIIEARQTGVNLFVLTADRPPELWECGANQAILQQNMFGQYPVANVNLPKPNADYSAQWLISLLEQAAFQQKQQGGVVHINVPFAEPLYDATDEEVNSHSWLQPLQRWLIQKKSWINVEVQQNEVLMHENWDHWRTKRGVVVVGQLPAEQAMGINSWASAMGWVLLTDIQSGVVPTTPYEDIWLANQTVREKLLQADIVIQFGARFISKRINQFLQAFKGEFWLVEQSGKALDPYHHSLTRFNAKVHHWLRAHPPLRQKPWLLEPLALSKFCATFIEQQVGGNLTEASLALRLPTLLPYNGVLFLGNSLLVRLVDALTQLPESYPVYTNRGASGIDGLLATAAGIGIGSNKPVVAVIGDTSTLYDLNSFALFKNVTQPTLIFVINNNGGAIFDMLPVDEQVKDQFYRLPHNGDFSQIAAMFDLKYAHPYTWADLNSVVKQAYSRRKATLIEIKTNPSDGSSLYKRLIEQISHAVIGA.

The protein belongs to the TPP enzyme family. MenD subfamily. As to quaternary structure, homodimer. Requires Mg(2+) as cofactor. The cofactor is Mn(2+). It depends on thiamine diphosphate as a cofactor.

It catalyses the reaction isochorismate + 2-oxoglutarate + H(+) = 5-enolpyruvoyl-6-hydroxy-2-succinyl-cyclohex-3-ene-1-carboxylate + CO2. The protein operates within quinol/quinone metabolism; 1,4-dihydroxy-2-naphthoate biosynthesis; 1,4-dihydroxy-2-naphthoate from chorismate: step 2/7. Its pathway is quinol/quinone metabolism; menaquinone biosynthesis. Catalyzes the thiamine diphosphate-dependent decarboxylation of 2-oxoglutarate and the subsequent addition of the resulting succinic semialdehyde-thiamine pyrophosphate anion to isochorismate to yield 2-succinyl-5-enolpyruvyl-6-hydroxy-3-cyclohexene-1-carboxylate (SEPHCHC). In Haemophilus influenzae (strain PittGG), this protein is 2-succinyl-5-enolpyruvyl-6-hydroxy-3-cyclohexene-1-carboxylate synthase.